Consider the following 474-residue polypeptide: Vasculin-like protein 1 (474 aa).

A disordered region spans residues Q17–V42. Basic and acidic residues predominate over residues F26 to G38. Phosphoserine occurs at positions 49 and 76. The segment at G91–Q191 is disordered. The segment covering N116–K128 has biased composition (basic residues). A compositionally biased stretch (basic and acidic residues) spans P136–F154. The residue at position 202 (S202) is a Phosphoserine. The tract at residues L238 to A371 is disordered. Over residues G262–S277 the composition is skewed to polar residues. The segment covering S291–T312 has biased composition (low complexity). The residue at position 292 (S292) is a Phosphoserine. T301 is subject to Phosphothreonine. 2 stretches are compositionally biased toward basic and acidic residues: residues R317–L346 and E356–C365. Position 382 is a phosphoserine (S382). The tract at residues A453–K474 is disordered.

This sequence belongs to the vasculin family.

The protein localises to the nucleus. Its function is as follows. Possible transcription factor. The chain is Vasculin-like protein 1 (GPBP1L1) from Homo sapiens (Human).